The primary structure comprises 142 residues: Large ribosomal subunit protein uL11 (142 aa).

Belongs to the universal ribosomal protein uL11 family. In terms of assembly, part of the ribosomal stalk of the 50S ribosomal subunit. Interacts with L10 and the large rRNA to form the base of the stalk. L10 forms an elongated spine to which L12 dimers bind in a sequential fashion forming a multimeric L10(L12)X complex. In terms of processing, one or more lysine residues are methylated.

In terms of biological role, forms part of the ribosomal stalk which helps the ribosome interact with GTP-bound translation factors. The protein is Large ribosomal subunit protein uL11 of Lachnoclostridium phytofermentans (strain ATCC 700394 / DSM 18823 / ISDg) (Clostridium phytofermentans).